A 154-amino-acid polypeptide reads, in one-letter code: NADPH-dependent 7-cyano-7-deazaguanine reductase (154 aa).

Cys52 functions as the Thioimide intermediate in the catalytic mechanism. The Proton donor role is filled by Asp59. Substrate is bound by residues 74-76 (VES) and 93-94 (HE).

The protein belongs to the GTP cyclohydrolase I family. QueF type 1 subfamily.

It is found in the cytoplasm. It carries out the reaction 7-aminomethyl-7-carbaguanine + 2 NADP(+) = 7-cyano-7-deazaguanine + 2 NADPH + 3 H(+). Its pathway is tRNA modification; tRNA-queuosine biosynthesis. Functionally, catalyzes the NADPH-dependent reduction of 7-cyano-7-deazaguanine (preQ0) to 7-aminomethyl-7-deazaguanine (preQ1). This is NADPH-dependent 7-cyano-7-deazaguanine reductase from Rhizobium rhizogenes (strain K84 / ATCC BAA-868) (Agrobacterium radiobacter).